A 43-amino-acid chain; its full sequence is Photosystem II reaction center protein Psb30 (43 aa).

The helical transmembrane segment at 16–36 threads the bilayer; the sequence is IAQLTMLAMVLIAGPVVIVLL.

Belongs to the Psb30/Ycf12 family. As to quaternary structure, PSII is composed of 1 copy each of membrane proteins PsbA, PsbB, PsbC, PsbD, PsbE, PsbF, PsbH, PsbI, PsbJ, PsbK, PsbL, PsbM, PsbT, PsbX, PsbY, PsbZ, Psb30/Ycf12, peripheral proteins PsbO, CyanoQ (PsbQ), PsbU, PsbV and a large number of cofactors. It forms dimeric complexes.

The protein localises to the cellular thylakoid membrane. In terms of biological role, a core subunit of photosystem II (PSII), probably helps stabilize the reaction center. The chain is Photosystem II reaction center protein Psb30 from Trichodesmium erythraeum (strain IMS101).